The primary structure comprises 276 residues: Rhomboid protease GlpG (276 aa).

6 helical membrane passes run 94–114 (GPVTWIVMLACVVVYIAMSLI), 142–162 (IFMHFSLMHILFNLLWWWYLG), 169–189 (LGSGKLIVITVISALLSGYVQ), 192–212 (FSGPWFGGLSGVVYALMGYVW), 229–249 (LIIFALLWIVASWFDWFGMSM), and 250–270 (ANGAHIAGLIVGLAMAFVDTL). Ser-201 serves as the catalytic Nucleophile. Residue His-254 is part of the active site.

This sequence belongs to the peptidase S54 family.

It is found in the cell inner membrane. It catalyses the reaction Cleaves type-1 transmembrane domains using a catalytic dyad composed of serine and histidine that are contributed by different transmembrane domains.. Functionally, rhomboid-type serine protease that catalyzes intramembrane proteolysis. In Salmonella paratyphi A (strain ATCC 9150 / SARB42), this protein is Rhomboid protease GlpG.